The primary structure comprises 412 residues: Tyrosine--tRNA ligase (412 aa).

Position 31 (tyrosine 31) interacts with L-tyrosine. A 'HIGH' region motif is present at residues 36 to 45 (PTAASLHIGH). 2 residues coordinate L-tyrosine: tyrosine 162 and glutamine 166. A 'KMSKS' region motif is present at residues 222–226 (KIGKT). Lysine 225 contributes to the ATP binding site. Residues 345-412 (KRWIDLFVGV…KKKKLVLHLI (68 aa)) form the S4 RNA-binding domain.

Belongs to the class-I aminoacyl-tRNA synthetase family. TyrS type 1 subfamily. In terms of assembly, homodimer.

It is found in the cytoplasm. The enzyme catalyses tRNA(Tyr) + L-tyrosine + ATP = L-tyrosyl-tRNA(Tyr) + AMP + diphosphate + H(+). Catalyzes the attachment of tyrosine to tRNA(Tyr) in a two-step reaction: tyrosine is first activated by ATP to form Tyr-AMP and then transferred to the acceptor end of tRNA(Tyr). This is Tyrosine--tRNA ligase from Chlamydia caviae (strain ATCC VR-813 / DSM 19441 / 03DC25 / GPIC) (Chlamydophila caviae).